Here is a 1603-residue protein sequence, read N- to C-terminus: Pentafunctional AROM polypeptide (1603 aa).

The interval 1 to 384 (MGVPTKISIL…YEPRASTVSN (384 aa)) is 3-dehydroquinate synthase. Residues 44–46 (DTN), 81–84 (ESSK), 114–116 (GGV), and Asp-119 each bind NAD(+). 7-phospho-2-dehydro-3-deoxy-D-arabino-heptonate is bound at residue Arg-130. 139–140 (TT) contacts NAD(+). Residues Asp-146 and Lys-152 each coordinate 7-phospho-2-dehydro-3-deoxy-D-arabino-heptonate. Lys-161 contacts NAD(+). Asn-162 provides a ligand contact to 7-phospho-2-dehydro-3-deoxy-D-arabino-heptonate. NAD(+)-binding positions include 179-182 (FLNT) and Asn-190. Glu-194 contributes to the Zn(2+) binding site. 7-phospho-2-dehydro-3-deoxy-D-arabino-heptonate-binding positions include 194–197 (EVIK) and Lys-250. The Proton acceptor; for 3-dehydroquinate synthase activity role is filled by Glu-260. Residues 264 to 268 (RNLLN) and His-271 each bind 7-phospho-2-dehydro-3-deoxy-D-arabino-heptonate. His-271 contributes to the Zn(2+) binding site. His-275 functions as the Proton acceptor; for 3-dehydroquinate synthase activity in the catalytic mechanism. Residues His-287 and Lys-356 each coordinate 7-phospho-2-dehydro-3-deoxy-D-arabino-heptonate. His-287 is a binding site for Zn(2+). The segment at 397 to 842 (VYPGFPKSLN…WNTLAQTFKV (446 aa)) is EPSP synthase. The For EPSP synthase activity role is filled by Cys-824. A shikimate kinase region spans residues 872 to 1064 (AASIFIIGMR…RRKENTFFVS (193 aa)). 879-886 (GMRGAGKT) is an ATP binding site. Residues 1065 to 1285 (LTFPDLTPAS…AAPGQLSARE (221 aa)) form a 3-dehydroquinase region. The Proton acceptor; for 3-dehydroquinate dehydratase activity role is filled by His-1188. Lys-1216 (schiff-base intermediate with substrate; for 3-dehydroquinate dehydratase activity) is an active-site residue. Positions 1298-1603 (AKKFAVIGKP…GVSSSDDTIS (306 aa)) are shikimate dehydrogenase.

The protein in the N-terminal section; belongs to the sugar phosphate cyclases superfamily. Dehydroquinate synthase family. It in the 2nd section; belongs to the EPSP synthase family. This sequence in the 3rd section; belongs to the shikimate kinase family. In the 4th section; belongs to the type-I 3-dehydroquinase family. The protein in the C-terminal section; belongs to the shikimate dehydrogenase family. Homodimer. It depends on Zn(2+) as a cofactor.

It is found in the cytoplasm. The catalysed reaction is 7-phospho-2-dehydro-3-deoxy-D-arabino-heptonate = 3-dehydroquinate + phosphate. It catalyses the reaction 3-dehydroquinate = 3-dehydroshikimate + H2O. The enzyme catalyses shikimate + NADP(+) = 3-dehydroshikimate + NADPH + H(+). It carries out the reaction shikimate + ATP = 3-phosphoshikimate + ADP + H(+). The catalysed reaction is 3-phosphoshikimate + phosphoenolpyruvate = 5-O-(1-carboxyvinyl)-3-phosphoshikimate + phosphate. Its pathway is metabolic intermediate biosynthesis; chorismate biosynthesis; chorismate from D-erythrose 4-phosphate and phosphoenolpyruvate: step 2/7. It participates in metabolic intermediate biosynthesis; chorismate biosynthesis; chorismate from D-erythrose 4-phosphate and phosphoenolpyruvate: step 3/7. It functions in the pathway metabolic intermediate biosynthesis; chorismate biosynthesis; chorismate from D-erythrose 4-phosphate and phosphoenolpyruvate: step 4/7. The protein operates within metabolic intermediate biosynthesis; chorismate biosynthesis; chorismate from D-erythrose 4-phosphate and phosphoenolpyruvate: step 5/7. Its pathway is metabolic intermediate biosynthesis; chorismate biosynthesis; chorismate from D-erythrose 4-phosphate and phosphoenolpyruvate: step 6/7. In terms of biological role, the AROM polypeptide catalyzes 5 consecutive enzymatic reactions in prechorismate polyaromatic amino acid biosynthesis. The protein is Pentafunctional AROM polypeptide of Paracoccidioides brasiliensis (strain Pb03).